The following is a 509-amino-acid chain: uncharacterized protein (509 aa).

Positions 1-32 (MMLPKRNIIHFLRKRAIFIVAAFIALLTVDYS) are cleaved as a signal peptide.

The protein localises to the endoplasmic reticulum. This is an uncharacterized protein from Schizosaccharomyces pombe (strain 972 / ATCC 24843) (Fission yeast).